The primary structure comprises 379 residues: Putative zinc metalloprotease BMEI0829 (379 aa).

Position 33 (H33) interacts with Zn(2+). The active site involves E34. H37 is a Zn(2+) binding site. 4 helical membrane passes run 39-61 (LVAR…ELLG), 122-144 (VFAG…FALY), 305-327 (FDWL…LFPL), and 355-377 (IFYR…NDLF). In terms of domain architecture, PDZ spans 133 to 208 (TIAIFSVFFA…LNFTVERDGK (76 aa)).

The protein belongs to the peptidase M50B family. The cofactor is Zn(2+).

It is found in the cell inner membrane. This chain is Putative zinc metalloprotease BMEI0829, found in Brucella melitensis biotype 1 (strain ATCC 23456 / CCUG 17765 / NCTC 10094 / 16M).